The chain runs to 235 residues: Peptidyl-tRNA hydrolase (235 aa).

Residue Tyr-14 coordinates tRNA. His-19 acts as the Proton acceptor in catalysis. TRNA-binding residues include Phe-64, Asn-66, and Asn-112. The tract at residues 186–235 (RTAPPRSSGGSPKTDKPAKATREPPPAAKPEATPEEETRSPLQRLVDKFR) is disordered. The segment covering 198–207 (KTDKPAKATR) has biased composition (basic and acidic residues).

It belongs to the PTH family. Monomer.

The protein localises to the cytoplasm. The enzyme catalyses an N-acyl-L-alpha-aminoacyl-tRNA + H2O = an N-acyl-L-amino acid + a tRNA + H(+). Hydrolyzes ribosome-free peptidyl-tRNAs (with 1 or more amino acids incorporated), which drop off the ribosome during protein synthesis, or as a result of ribosome stalling. Its function is as follows. Catalyzes the release of premature peptidyl moieties from peptidyl-tRNA molecules trapped in stalled 50S ribosomal subunits, and thus maintains levels of free tRNAs and 50S ribosomes. The polypeptide is Peptidyl-tRNA hydrolase (Dinoroseobacter shibae (strain DSM 16493 / NCIMB 14021 / DFL 12)).